The following is a 795-amino-acid chain: Protocadherin beta-4 (795 aa).

A signal peptide spans 1 to 27; the sequence is MKKLGRIHPNRQVLAFILMVFLSQVRL. The Extracellular portion of the chain corresponds to 28-689; it reads EPIRYSVLEE…SQADSLTVYL (662 aa). 5 Cadherin domains span residues 34–132, 137–241, 246–346, 351–450, and 455–560; these read VLEE…SPVF, VLLK…APEF, YGVQ…PPEL, LTSS…APAF, and YTLF…SPFV. The N-linked (GlcNAc...) asparagine glycan is linked to N183. A glycan (N-linked (GlcNAc...) asparagine) is linked at N417. The N-linked (GlcNAc...) asparagine glycan is linked to N566. The Cadherin 6 domain occupies 567-670; sequence GSAPCTELVP…LVDGFSQPYL (104 aa). The helical transmembrane segment at 690 to 710 threads the bilayer; the sequence is VVALASVSSLFLFSVLLFVAV. Residues 711–795 lie on the Cytoplasmic side of the membrane; it reads RLCRRSRAAS…PKFRNSLVFS (85 aa).

It is found in the cell membrane. In terms of biological role, potential calcium-dependent cell-adhesion protein. May be involved in the establishment and maintenance of specific neuronal connections in the brain. This is Protocadherin beta-4 (PCDHB4) from Pan troglodytes (Chimpanzee).